We begin with the raw amino-acid sequence, 278 residues long: Small ribosomal subunit biogenesis GTPase RsgA (278 aa).

Positions 62–218 (KNELTRPRVA…ICDTPGFNVI (157 aa)) constitute a CP-type G domain. GTP-binding positions include 112 to 115 (TKTD) and 162 to 170 (GQSGVGKSS). Residues Cys-241, Cys-246, His-248, and Cys-254 each coordinate Zn(2+).

Belongs to the TRAFAC class YlqF/YawG GTPase family. RsgA subfamily. As to quaternary structure, monomer. Associates with 30S ribosomal subunit, binds 16S rRNA. Zn(2+) is required as a cofactor.

The protein resides in the cytoplasm. One of several proteins that assist in the late maturation steps of the functional core of the 30S ribosomal subunit. Helps release RbfA from mature subunits. May play a role in the assembly of ribosomal proteins into the subunit. Circularly permuted GTPase that catalyzes slow GTP hydrolysis, GTPase activity is stimulated by the 30S ribosomal subunit. The polypeptide is Small ribosomal subunit biogenesis GTPase RsgA (Mycoplasma genitalium (strain ATCC 33530 / DSM 19775 / NCTC 10195 / G37) (Mycoplasmoides genitalium)).